We begin with the raw amino-acid sequence, 360 residues long: Peptide chain release factor 1 (360 aa).

Glutamine 235 bears the N5-methylglutamine mark. Positions 284 to 313 are disordered; it reads AKRQQAEASTRRNLLGSGDRSDRNRTYNFP.

Belongs to the prokaryotic/mitochondrial release factor family. Methylated by PrmC. Methylation increases the termination efficiency of RF1.

The protein resides in the cytoplasm. Functionally, peptide chain release factor 1 directs the termination of translation in response to the peptide chain termination codons UAG and UAA. The sequence is that of Peptide chain release factor 1 from Salmonella gallinarum (strain 287/91 / NCTC 13346).